We begin with the raw amino-acid sequence, 278 residues long: Shikimate dehydrogenase (NADP(+)) (278 aa).

Shikimate-binding positions include 23–25 and T70; that span reads SRS. K74 serves as the catalytic Proton acceptor. E86 provides a ligand contact to NADP(+). Shikimate is bound by residues N95 and D110. Residues 135–139, 159–164, and M224 contribute to the NADP(+) site; these read GAGGA and NRTKEK. Y226 provides a ligand contact to shikimate. An NADP(+)-binding site is contributed by G248.

It belongs to the shikimate dehydrogenase family. Homodimer.

The enzyme catalyses shikimate + NADP(+) = 3-dehydroshikimate + NADPH + H(+). Its pathway is metabolic intermediate biosynthesis; chorismate biosynthesis; chorismate from D-erythrose 4-phosphate and phosphoenolpyruvate: step 4/7. Its function is as follows. Involved in the biosynthesis of the chorismate, which leads to the biosynthesis of aromatic amino acids. Catalyzes the reversible NADPH linked reduction of 3-dehydroshikimate (DHSA) to yield shikimate (SA). This is Shikimate dehydrogenase (NADP(+)) from Alcanivorax borkumensis (strain ATCC 700651 / DSM 11573 / NCIMB 13689 / SK2).